The primary structure comprises 367 residues: Folliculin-like protein bhd1 (367 aa).

Disordered regions lie at residues 41 to 75 (RSIG…QSST) and 92 to 115 (SKGP…SPIS). Residues 54 to 64 (EAFKNELDNRN) are compositionally biased toward basic and acidic residues. Polar residues-rich tracts occupy residues 65–75 (NADSQSLQSST) and 99–115 (RVNS…SPIS). The 172-residue stretch at 131-302 (FSVPDVQPRL…SNIGTAPSYE (172 aa)) folds into the uDENN FLCN/SMCR8-type domain.

Belongs to the folliculin family.

Its subcellular location is the nucleus. The protein localises to the cytoplasm. This chain is Folliculin-like protein bhd1 (bhd1), found in Schizosaccharomyces pombe (strain 972 / ATCC 24843) (Fission yeast).